The sequence spans 307 residues: Carbamate kinase (307 aa).

This sequence belongs to the carbamate kinase family.

Its subcellular location is the cytoplasm. The catalysed reaction is hydrogencarbonate + NH4(+) + ATP = carbamoyl phosphate + ADP + H2O + H(+). It functions in the pathway metabolic intermediate metabolism; carbamoyl phosphate degradation; CO(2) and NH(3) from carbamoyl phosphate: step 1/1. Carbamate kinase involved in the arginine deiminase pathway of fermentative arginine utilization. The protein is Carbamate kinase (arcC) of Halobacterium salinarum (strain ATCC 700922 / JCM 11081 / NRC-1) (Halobacterium halobium).